A 396-amino-acid chain; its full sequence is Calcium-responsive transactivator (396 aa).

The interval Met1–Ser148 is N-terminal auto-inhibitory domain; necessary for interaction with SMARCA4/BRG1. The SH2-binding motif lies at Tyr50–Ile53. Disordered stretches follow at residues Gln72 to Val162, Gln192 to Ala280, and Ser311 to Gln396. Positions Leu90 to Ser106 are enriched in low complexity. Composition is skewed to polar residues over residues Asp107 to Gln122 and Ser128 to Ile147. Residues Gly149 to Met232 are methionine-rich intra-molecular domain. 3 stretches are compositionally biased toward low complexity: residues Ser199–Gln229, Ser238–Gln261, and Ser311–Tyr369. The interval Tyr246–Tyr317 is MFD domain. Residues Ser334–Gln396 are necessary for nuclear localization. Positions Ser353–Pro356 match the SH2-binding motif. Residues Ala371–Gln379 carry the SH3-binding motif. A compositionally biased stretch (low complexity) spans Tyr384–Gln396. Positions Glu387–Gln396 are necessary for interaction with CREBBP and for the recruitment of CREBBP to the nuclear bodies. Positions Tyr391–Tyr394 match the SH2-binding motif.

It belongs to the SS18 family. In terms of assembly, homodimer. Dimerization may be necessary for its function in neuronal dendritic development. Interacts (via C-terminus) with CREBBP (via N-terminus), EP300 and SMARCA4/BRG1. Interacts with the nBAF complex. Association with CREBBP facilitates transcription while the association with SMARCA4/BRG1 suppresses CREST-mediated transcription in resting neurons. As to expression, ubiquitous; with lowest levels in spleen.

The protein resides in the nucleus. It localises to the chromosome. The protein localises to the centromere. It is found in the kinetochore. Transcriptional activator which is required for calcium-dependent dendritic growth and branching in cortical neurons. Recruits CREB-binding protein (CREBBP) to nuclear bodies. Component of the CREST-BRG1 complex, a multiprotein complex that regulates promoter activation by orchestrating a calcium-dependent release of a repressor complex and a recruitment of an activator complex. In resting neurons, transcription of the c-FOS promoter is inhibited by BRG1-dependent recruitment of a phospho-RB1-HDAC1 repressor complex. Upon calcium influx, RB1 is dephosphorylated by calcineurin, which leads to release of the repressor complex. At the same time, there is increased recruitment of CREBBP to the promoter by a CREST-dependent mechanism, which leads to transcriptional activation. The CREST-BRG1 complex also binds to the NR2B promoter, and activity-dependent induction of NR2B expression involves a release of HDAC1 and recruitment of CREBBP. The chain is Calcium-responsive transactivator (SS18L1) from Homo sapiens (Human).